The primary structure comprises 370 residues: Flagellar P-ring protein (370 aa).

An N-terminal signal peptide occupies residues 1 to 27 (MPARPIPVPLLALALAAALAVPSPAAA).

Belongs to the FlgI family. As to quaternary structure, the basal body constitutes a major portion of the flagellar organelle and consists of four rings (L,P,S, and M) mounted on a central rod.

It is found in the periplasm. It localises to the bacterial flagellum basal body. In terms of biological role, assembles around the rod to form the L-ring and probably protects the motor/basal body from shearing forces during rotation. The sequence is that of Flagellar P-ring protein from Anaeromyxobacter sp. (strain K).